Here is a 711-residue protein sequence, read N- to C-terminus: C-Jun-amino-terminal kinase-interacting protein 1 (711 aa).

Residues 1-27 form a disordered region; that stretch reads MAERESGGLGGGAASPPAASPFLGLHI. Positions 14–25 are enriched in low complexity; sequence ASPPAASPFLGL. 3 positions are modified to phosphoserine: Ser15, Ser29, and Ser40. Residues 78–371 form a disordered region; it reads AGGGGAGSRL…PPRASLSSDT (294 aa). Residue Thr103 is modified to Phosphothreonine; by MAPK8, MAPK9 and MAPK10. Over residues 105–116 the composition is skewed to acidic residues; that stretch reads GAEDDEEDDDEE. Residues 127–285 are JNK-binding domain (JBD); sequence PKAESGQEPA…EATEEIYLTP (159 aa). The span at 139–149 shows a compositional bias: low complexity; that stretch reads GQGQSQGQSQG. A Phosphoserine modification is found at Ser152. A minimal inhibitory domain (MID) region spans residues 157-176; that stretch reads RPKRPTTLNLFPQVPRSQDT. Over residues 162–182 the composition is skewed to polar residues; sequence TTLNLFPQVPRSQDTLNNNSL. A phosphoserine mark is found at Ser181, Ser187, Ser193, Ser195, and Ser196. A compositionally biased stretch (polar residues) spans 194–204; it reads RSSSPLKTGEQ. The residue at position 205 (Thr205) is a Phosphothreonine; by MAPK8, MAPK9 and MAPK10. Ser214 is modified (phosphoserine). A compositionally biased stretch (polar residues) spans 228–244; sequence DRGTSTDSPCRRSTATQ. The segment covering 267 to 277 has biased composition (basic and acidic residues); that stretch reads IHYQADVRLEA. Residues 283–471 form an interaction with MAP3K7 region; it reads LTPVQRPPDA…NVFMSGRSRS (189 aa). Phosphoserine is present on residues Ser311, Ser328, Ser330, Ser340, Ser355, Ser366, Ser369, Ser407, and Ser409. 2 consecutive short sequence motifs (D-box) follow at residues 353-360 and 364-372; these read RGSLGEPP and RASLSSDTS. Thr411 carries the phosphothreonine modification. The interval 429–451 is disordered; sequence EEYEEAPRPQPPACLSEDSTPDE. Phosphoserine is present on residues Ser444 and Ser447. Thr448 carries the phosphothreonine modification. Residues Ser469, Ser471, Ser472, and Ser473 each carry the phosphoserine modification. An interaction with VRK2 region spans residues 471–660; sequence SSSAESFGLF…PKNNKYFGFI (190 aa). The SH3 domain maps to 488–549; that stretch reads EQEQTHRAIF…PAYYAIEVTK (62 aa). Residues 561 to 700 form the PID domain; it reads SDWVDQFRVK…FQQFYKQFVE (140 aa).

It belongs to the JIP scaffold family. Forms homo- or heterooligomeric complexes. Binds specific components of the JNK signaling pathway namely, MAPK8/JNK1, MAPK9/JNK2, MAPK10/JNK3, MAP2K7/MKK7, MAP3K11/MLK3 and DLK1. Also binds the proline-rich domain-containing splice variant of apolipoprotein E receptor 2 (ApoER2). Interacts, via the PID domain, with ARHGEF28. Binds the cytoplasmic tails of LRP1 and LRP2 (Megalin). Binds the TPR motif-containing C-terminal of KNS2, then the pre-assembled MAPK8IP1 scaffolding complexes are transported as a cargo of kinesin, to the required subcellular location. Interacts with the cytoplasmic domain of APP. Interacts with DCLK2. Interacts with MAP3K7/TAK1. Interacts with isoform 1 and isoform 2 of VRK2. Found in a complex with SH3RF1, RAC1, MAP3K11/MLK3, MAP2K7/MKK7 and MAPK8/JNK1. Found in a complex with SH3RF1, RAC2, MAP3K7/TAK1, MAP2K7/MKK7, MAPK8/JNK1 and MAPK9/JNK2. Interacts with SH3RF2. In terms of processing, phosphorylated by MAPK8, MAPK9 and MAPK10. Phosphorylation on Thr-103 is also necessary for the dissociation and activation of MAP3K12. Phosphorylated by isoform 1 and isoform 2 of VRK2. Hyperphosphorylated during mitosis following activation of stress-activated and MAP kinases. Ubiquitinated. Two preliminary events are required to prime for ubiquitination; phosphorylation and an increased in intracellular calcium concentration. Then, the calcium influx initiates ubiquitination and degradation by the ubiquitin-proteasome pathway. In terms of tissue distribution, highly expressed in brain. Expressed in neurons, localizing to neurite tips in differentiating cells. Also expressed in the pancreas, testis and prostate. Low levels in heart, ovary and small intestine. Decreased levels in pancreatic beta cells sensitize cells to IL-1-beta-induced apoptosis.

It localises to the cytoplasm. The protein localises to the perinuclear region. It is found in the nucleus. The protein resides in the endoplasmic reticulum membrane. Its subcellular location is the mitochondrion membrane. Its function is as follows. The JNK-interacting protein (JIP) group of scaffold proteins selectively mediates JNK signaling by aggregating specific components of the MAPK cascade to form a functional JNK signaling module. Required for JNK activation in response to excitotoxic stress. Cytoplasmic MAPK8IP1 causes inhibition of JNK-regulated activity by retaining JNK in the cytoplasm and inhibiting JNK phosphorylation of c-Jun. May also participate in ApoER2-specific reelin signaling. Directly, or indirectly, regulates GLUT2 gene expression and beta-cell function. Appears to have a role in cell signaling in mature and developing nerve terminals. May function as a regulator of vesicle transport, through interactions with the JNK-signaling components and motor proteins. Functions as an anti-apoptotic protein and whose level seems to influence the beta-cell death or survival response. Acts as a scaffold protein that coordinates with SH3RF1 in organizing different components of the JNK pathway, including RAC1 or RAC2, MAP3K11/MLK3 or MAP3K7/TAK1, MAP2K7/MKK7, MAPK8/JNK1 and/or MAPK9/JNK2 into a functional multiprotein complex to ensure the effective activation of the JNK signaling pathway. Regulates the activation of MAPK8/JNK1 and differentiation of CD8(+) T-cells. This is C-Jun-amino-terminal kinase-interacting protein 1 (MAPK8IP1) from Homo sapiens (Human).